Here is a 135-residue protein sequence, read N- to C-terminus: MQSSSPSTSHCSQIPIKIQHHIAKKRQVRRRRVDLDCGCSYYIHLDCINHGFTHRGVHHCASSNEWRLYLRDNKSPIFHDNQTQPTTIQQQIQFPNISNQVQPQLEEGTGDSQMFSQLPHLDDLTVSDWSFFKSL.

The Nuclear localization signal motif lies at 17-32 (KIQHHIAKKRQVRRRR). A zinc finger spans residues 37–54 (CGCSYYIHLDCINHGFTH). Residues 120 to 135 (HLDDLTVSDWSFFKSL) are transactivation.

This sequence belongs to the geminiviridae transcriptional activator protein family. Monomer. Homodimer. Homooligomer. Self-interaction correlates with nuclear localization and efficient activation of transcription. Monomers suppress local silencing by interacting with and inactivating host adenosine kinase 2 (ADK2) in the cytoplasm. Interacts with and inhibits host SNF1 kinase. Binds to ssDNA. May interact with host RPS27A. In terms of processing, phosphorylated.

The protein localises to the host nucleus. Its subcellular location is the host cytoplasm. Multifunctional protein that modulates host antiviral defenses and promotes host attractiveness to insect vectors. Acts as a suppressor of RNA-mediated gene silencing, also known as post-transcriptional gene silencing (PTGS), a mechanism of plant viral defense that limits the accumulation of viral RNAs. TrAP suppresses the host RNA silencing by inhibiting adenosine kinase 2 (ADK2), a kinase involved in a general methylation pathway. Also suppresses the host basal defense by interacting with and inhibiting SNF1 kinase, a key regulator of cell metabolism implicated in innate antiviral defense. Its function is as follows. Inhibits signal transduction by the phytohormone jasmonate, making the infected plant more attractive to aphids, which are the second host to play a role as a dissemination vector. Acts by binding to ubiquitin precursor RPS27A, thereby preventing ubiquitin degradation of JAZ. In Tomato yellow leaf curl Sardinia virus (isolate Spain-1) (TYLCSV), this protein is Transcriptional activator protein.